Here is a 146-residue protein sequence, read N- to C-terminus: Bifunctional adenosine 5'-phosphosulfate phosphorylase/adenylylsulfatase HINT4 (146 aa).

One can recognise an HIT domain in the interval 9-120 (IFCEIVRNPT…YVPRWKAIKY (112 aa)). A Histidine triad motif motif is present at residues 101–105 (HLHLH). H105 serves as the catalytic Tele-AMP-histidine intermediate.

As to quaternary structure, homodimer.

Its subcellular location is the peroxisome. It carries out the reaction sulfate + ADP + H(+) = adenosine 5'-phosphosulfate + phosphate. The enzyme catalyses adenosine 5'-phosphosulfate + H2O = sulfate + AMP + 2 H(+). With respect to regulation, the adenosine 5'-phosphosulfate phosphorylase activity is enhanced at low pH. Possesses adenylylsulfatase activity in vitro, releasing AMP and sulfate from adenylyl sulfate. Also possesses adenosine 5'-phosphosulfate (APS) phosphorylase activity in vitro. Catalyzes the phosphorolysis of APS, leading to ADP and sulfate. The protein is Bifunctional adenosine 5'-phosphosulfate phosphorylase/adenylylsulfatase HINT4 of Arabidopsis thaliana (Mouse-ear cress).